Reading from the N-terminus, the 288-residue chain is Putative movement protein (288 aa).

The disordered stretch occupies residues 207–288 (TGPRATLSQP…TSSRSRRVRG (82 aa)).

Transports viral genome to neighboring plant cells directly through plasmosdesmata, without any budding. The movement protein allows efficient cell to cell propagation, by bypassing the host cell wall barrier (Potential). The polypeptide is Putative movement protein (Cucumis melo (Muskmelon)).